The sequence spans 149 residues: Transcription antitermination protein NusB (149 aa).

The protein belongs to the NusB family.

In terms of biological role, involved in transcription antitermination. Required for transcription of ribosomal RNA (rRNA) genes. Binds specifically to the boxA antiterminator sequence of the ribosomal RNA (rrn) operons. The polypeptide is Transcription antitermination protein NusB (Acinetobacter baumannii (strain SDF)).